Consider the following 275-residue polypeptide: Diaminopimelate epimerase (275 aa).

Residues Asn-20 and Asn-63 each contribute to the substrate site. Residue Cys-72 is the Proton donor of the active site. Substrate-binding positions include 73-74 (GN), Asn-179, and 197-198 (ER). Catalysis depends on Cys-207, which acts as the Proton acceptor. Substrate is bound at residue 208 to 209 (GT).

Belongs to the diaminopimelate epimerase family. In terms of assembly, homodimer.

It localises to the cytoplasm. The catalysed reaction is (2S,6S)-2,6-diaminopimelate = meso-2,6-diaminopimelate. It functions in the pathway amino-acid biosynthesis; L-lysine biosynthesis via DAP pathway; DL-2,6-diaminopimelate from LL-2,6-diaminopimelate: step 1/1. In terms of biological role, catalyzes the stereoinversion of LL-2,6-diaminopimelate (L,L-DAP) to meso-diaminopimelate (meso-DAP), a precursor of L-lysine and an essential component of the bacterial peptidoglycan. The chain is Diaminopimelate epimerase from Chlamydia trachomatis serovar L2 (strain ATCC VR-902B / DSM 19102 / 434/Bu).